A 796-amino-acid polypeptide reads, in one-letter code: Protocadherin beta-3 (796 aa).

The first 26 residues, 1 to 26 (MEAGGERFLRQRQVLLLFVFLGGSLA), serve as a signal peptide directing secretion. Residues 27-690 (GSESRRYSVA…AQADLLTVYL (664 aa)) lie on the Extracellular side of the membrane. 5 Cadherin domains span residues 35 to 133 (VAEE…SPVF), 138 to 242 (MHLK…APEF), 247 to 347 (YEVA…PPEL), 352 to 451 (VNSP…APAF), and 456 to 561 (YTLF…SPFV). N169 carries N-linked (GlcNAc...) asparagine glycosylation. N418 and N436 each carry an N-linked (GlcNAc...) asparagine glycan. N567 is a glycosylation site (N-linked (GlcNAc...) asparagine). Residues 568 to 671 (GSAPCTELVP…LVDGFSQPYL (104 aa)) form the Cadherin 6 domain. Residues 691–711 (VVALASVSSLFLFSVLLFVAV) form a helical membrane-spanning segment. Over 712-796 (RLCRRSRAAS…PSFRKSFEFS (85 aa)) the chain is Cytoplasmic.

The protein resides in the cell membrane. Its function is as follows. Potential calcium-dependent cell-adhesion protein. May be involved in the establishment and maintenance of specific neuronal connections in the brain. In Homo sapiens (Human), this protein is Protocadherin beta-3 (PCDHB3).